The chain runs to 376 residues: Phosphoserine aminotransferase (376 aa).

An L-glutamate-binding site is contributed by Arg46. Pyridoxal 5'-phosphate contacts are provided by residues 80–81, Phe104, Thr150, Asp172, and Gln195; that span reads AT. Lys196 carries the N6-(pyridoxal phosphate)lysine modification. Position 247–248 (247–248) interacts with pyridoxal 5'-phosphate; it reads NT.

The protein belongs to the class-V pyridoxal-phosphate-dependent aminotransferase family. SerC subfamily. Homodimer. Pyridoxal 5'-phosphate serves as cofactor.

It localises to the cytoplasm. It carries out the reaction O-phospho-L-serine + 2-oxoglutarate = 3-phosphooxypyruvate + L-glutamate. The catalysed reaction is 4-(phosphooxy)-L-threonine + 2-oxoglutarate = (R)-3-hydroxy-2-oxo-4-phosphooxybutanoate + L-glutamate. Its pathway is amino-acid biosynthesis; L-serine biosynthesis; L-serine from 3-phospho-D-glycerate: step 2/3. The protein operates within cofactor biosynthesis; pyridoxine 5'-phosphate biosynthesis; pyridoxine 5'-phosphate from D-erythrose 4-phosphate: step 3/5. In terms of biological role, catalyzes the reversible conversion of 3-phosphohydroxypyruvate to phosphoserine and of 3-hydroxy-2-oxo-4-phosphonooxybutanoate to phosphohydroxythreonine. This chain is Phosphoserine aminotransferase, found in Corynebacterium glutamicum (strain R).